Reading from the N-terminus, the 236-residue chain is MKKKIYEGSSKILYSAEEDFLLIMAFSDKAILETGETVDISGKGVLNNNISSFLMDKLEMIGIENHFIEKINMREQLIQYVEVFPIQVIISSVACSRFVKEFGMDEGYVFDKPIIDFKVRSREFKYPIVNEYQILNFGWLTRDEIKAVKEQALRIYDFLSGLFIGVGIRLVECKLEFGRVFNGEESIIMLTDEISPDNCRLWHINSNEKLGFELLEKEPNKVFESYQLIADRLKEK.

Belongs to the SAICAR synthetase family.

The catalysed reaction is 5-amino-1-(5-phospho-D-ribosyl)imidazole-4-carboxylate + L-aspartate + ATP = (2S)-2-[5-amino-1-(5-phospho-beta-D-ribosyl)imidazole-4-carboxamido]succinate + ADP + phosphate + 2 H(+). It participates in purine metabolism; IMP biosynthesis via de novo pathway; 5-amino-1-(5-phospho-D-ribosyl)imidazole-4-carboxamide from 5-amino-1-(5-phospho-D-ribosyl)imidazole-4-carboxylate: step 1/2. In Rickettsia massiliae (strain Mtu5), this protein is Phosphoribosylaminoimidazole-succinocarboxamide synthase.